The primary structure comprises 430 residues: Enolase (430 aa).

Gln163 is a (2R)-2-phosphoglycerate binding site. The Proton donor role is filled by Glu205. Residues Asp242, Glu287, and Asp314 each contribute to the Mg(2+) site. (2R)-2-phosphoglycerate contacts are provided by Lys339, Arg368, Ser369, and Lys390. Lys339 serves as the catalytic Proton acceptor.

This sequence belongs to the enolase family. It depends on Mg(2+) as a cofactor.

The protein localises to the cytoplasm. The protein resides in the secreted. Its subcellular location is the cell surface. The enzyme catalyses (2R)-2-phosphoglycerate = phosphoenolpyruvate + H2O. The protein operates within carbohydrate degradation; glycolysis; pyruvate from D-glyceraldehyde 3-phosphate: step 4/5. Catalyzes the reversible conversion of 2-phosphoglycerate (2-PG) into phosphoenolpyruvate (PEP). It is essential for the degradation of carbohydrates via glycolysis. This is Enolase from Bacillus velezensis (strain DSM 23117 / BGSC 10A6 / LMG 26770 / FZB42) (Bacillus amyloliquefaciens subsp. plantarum).